We begin with the raw amino-acid sequence, 56 residues long: Ovomucoid (56 aa).

The Kazal-like domain maps to 6-56; that stretch reads VDCSEYPKPDCTLEYRPLCGSDNKTYANKCNFCNAVVESNGTLTLSHFGKC. 3 disulfides stabilise this stretch: cysteine 8–cysteine 38, cysteine 16–cysteine 35, and cysteine 24–cysteine 56. An N-linked (GlcNAc...) asparagine glycan is attached at asparagine 45.

The protein resides in the secreted. This Callipepla squamata castanogastris (Chestnut bellied scaled quail) protein is Ovomucoid.